Consider the following 281-residue polypeptide: Putative integrase/recombinase y4rD (281 aa).

In terms of domain architecture, Core-binding (CB) spans 5–98 (LLLAPLLESY…AIRSFFHHVA (94 aa)). The Tyr recombinase domain occupies 122 to 281 (EVTHHLTKAE…TMSGTENASV (160 aa)). Active-site residues include R162, K188, H262, and R265.

It belongs to the 'phage' integrase family.

In terms of biological role, seems to be non-functional. In Sinorhizobium fredii (strain NBRC 101917 / NGR234), this protein is Putative integrase/recombinase y4rD.